The sequence spans 553 residues: MLQSSNHHYLRPDYMTAAAAPTAQLDNKSSPLALLAQTCSAIGADTTNPKLLAANIEKSTKQLQHHPKGSSGSGGSGSFGLSQQASMDGSARDKSSPVSSHSSSVSTGSVEQQQLPPAHGSSSSSKPTPTTFKPYEPNNNISNITTAADCGATNLSSNNTSAQQRVKTPKSMTNGGGQRCDSNQSASSQHRESPTAAGSLRRTPTSGLAGGVMQHNGSPGLPPTASTTPGRSNSKESAAMHSPSAAAAAAAAAAQIASSNRLQEAALAAAKEANYVKALHAASQQGSASAAAAAASYYPPGYGSPYSMDLMTASSLMSPHHAMFKASAMNPYLNYARMKGLTEQSMMAATPNVCRDPYCTGCPASPHYINKAAGQPCPAGCPQCEGGGGGGGGSSKSSGSQGGSGGSSSAAAAAAAAAASSYHAQLAALAAASQMPYVCSWIGSDAAYCGKRFGTSDDLFQHLRTHTASVPDAVLSAAAAGGIPPNHPLFQRTYPTPPLSPLSAARYHPYGKPSMLPPSLAPPGMPGLPPHPALAQYFAPYSLYGPRMGSSHP.

2 disordered regions span residues 59–243 and 388–407; these read STKQ…MHSP and GGGGGGSSKSSGSQGGSGGS. Low complexity-rich tracts occupy residues 96-110 and 121-134; these read SPVSSHSSSVSTGSV and SSSSSKPTPTTFKP. Polar residues-rich tracts occupy residues 137-146, 153-173, and 224-236; these read PNNNISNITT, TNLSSNNTSAQQRVKTPKSMT, and TASTTPGRSNSKE. The self-association stretch occupies residues 287–480; it reads SASAAAAAAS…PDAVLSAAAA (194 aa). The interval 287 to 553 is interaction with noc; the sequence is SASAAAAAAS…YGPRMGSSHP (267 aa). The span at 388–406 shows a compositional bias: gly residues; that stretch reads GGGGGGSSKSSGSQGGSGG. The segment at 437 to 466 adopts a C2H2-type zinc-finger fold; sequence YVCSWIGSDAAYCGKRFGTSDDLFQHLRTH.

The protein belongs to the Elbow/Noc family. Self-associates. Interacts with gro and noc.

Its function is as follows. May negatively regulate Notch-induced cell proliferation in the eye-head primordium. May act in leg and wing primordia to negatively regulate body-wall specifying genes and thereby promote appendage formation. Required for tracheal development. This chain is Zinc finger protein Elbow (elB), found in Drosophila melanogaster (Fruit fly).